A 137-amino-acid polypeptide reads, in one-letter code: Small ribosomal subunit protein uS12 (137 aa).

2 disordered regions span residues 1–21 (MPTINQLVRKPRKSKIEKSDS) and 34–57 (VHTKLAAPQKRGVATRVGTMTPKK). A 3-methylthioaspartic acid modification is found at aspartate 102.

It belongs to the universal ribosomal protein uS12 family. In terms of assembly, part of the 30S ribosomal subunit. Contacts proteins S8 and S17. May interact with IF1 in the 30S initiation complex.

Its function is as follows. With S4 and S5 plays an important role in translational accuracy. Functionally, interacts with and stabilizes bases of the 16S rRNA that are involved in tRNA selection in the A site and with the mRNA backbone. Located at the interface of the 30S and 50S subunits, it traverses the body of the 30S subunit contacting proteins on the other side and probably holding the rRNA structure together. The combined cluster of proteins S8, S12 and S17 appears to hold together the shoulder and platform of the 30S subunit. This Streptococcus equi subsp. zooepidemicus (strain H70) protein is Small ribosomal subunit protein uS12.